A 235-amino-acid polypeptide reads, in one-letter code: Chalcone--flavanone isomerase 1 (235 aa).

Residues T50 and S192 each contribute to the substrate site.

It belongs to the chalcone isomerase family.

The enzyme catalyses a chalcone = a flavanone.. It participates in secondary metabolite biosynthesis; flavonoid biosynthesis. In terms of biological role, catalyzes the intramolecular cyclization of bicyclic chalcones into tricyclic (S)-flavanones. Responsible for the isomerization of 4,2',4',6'-tetrahydroxychalcone (also termed chalcone) into naringenin. The chain is Chalcone--flavanone isomerase 1 (CHI1) from Chrysanthemum morifolium (Florist's daisy).